We begin with the raw amino-acid sequence, 250 residues long: Cruxrhodopsin-1 (250 aa).

The Extracellular segment spans residues 1–9 (MPEPGSEAI). The helical transmembrane segment at 10 to 27 (WLWLGTAGMFLGMLYFIA) threads the bilayer. Residues 28 to 41 (RGWGETDSRRQKFY) lie on the Cytoplasmic side of the membrane. Residues 42-60 (IATILITAIAFVNYLAMAL) traverse the membrane as a helical segment. Residues 61–77 (GFGLTIVEFAGEEHPIY) are Extracellular-facing. Residues 78-94 (WARYSDWLFTTPLLLYD) traverse the membrane as a helical segment. The Cytoplasmic portion of the chain corresponds to 95–105 (LGLLAGADRNT). The chain crosses the membrane as a helical span at residues 106–125 (ITSLVSLDVLMIGTGLVATL). Over 126-138 (SPGSGVLSAGAER) the chain is Extracellular. A helical transmembrane segment spans residues 139-158 (LVWWGISTAFLLVLLYFLFS). The Cytoplasmic segment spans residues 159–176 (SLSGRVADLPSDTRSTFK). Residues 177–195 (TLRNLVTVVWLVYPVWWLI) form a helical membrane-spanning segment. Residues 196 to 207 (GTEGIGLVGIGI) are Extracellular-facing. A helical membrane pass occupies residues 208–227 (ETAGFMVIDLTAKVGFGIIL). The residue at position 220 (K220) is an N6-(retinylidene)lysine. Residues 228-250 (LRSHGVLDGAAETTGTGATPADD) lie on the Cytoplasmic side of the membrane.

Belongs to the archaeal/bacterial/fungal opsin family. As to quaternary structure, homotrimer.

It is found in the cell membrane. Light-driven proton pump. The polypeptide is Cruxrhodopsin-1 (cop1) (Haloarcula argentinensis).